Consider the following 555-residue polypeptide: Chaperonin GroEL 2 (555 aa).

ATP-binding positions include 29–32 (TLGP), 86–90 (DGTTT), glycine 414, 480–482 (NAL), and aspartate 496.

This sequence belongs to the chaperonin (HSP60) family. As to quaternary structure, forms a cylinder of 14 subunits composed of two heptameric rings stacked back-to-back. Interacts with the co-chaperonin GroES.

Its subcellular location is the cytoplasm. It carries out the reaction ATP + H2O + a folded polypeptide = ADP + phosphate + an unfolded polypeptide.. Together with its co-chaperonin GroES, plays an essential role in assisting protein folding. The GroEL-GroES system forms a nano-cage that allows encapsulation of the non-native substrate proteins and provides a physical environment optimized to promote and accelerate protein folding. The polypeptide is Chaperonin GroEL 2 (Synechococcus sp. (strain ATCC 27144 / PCC 6301 / SAUG 1402/1) (Anacystis nidulans)).